Consider the following 237-residue polypeptide: Large ribosomal subunit protein uL1 (237 aa).

Belongs to the universal ribosomal protein uL1 family. Part of the 50S ribosomal subunit.

Its function is as follows. Binds directly to 23S rRNA. The L1 stalk is quite mobile in the ribosome, and is involved in E site tRNA release. Protein L1 is also a translational repressor protein, it controls the translation of the L11 operon by binding to its mRNA. This Leptothrix cholodnii (strain ATCC 51168 / LMG 8142 / SP-6) (Leptothrix discophora (strain SP-6)) protein is Large ribosomal subunit protein uL1.